The sequence spans 316 residues: Aspartate carbamoyltransferase catalytic subunit (316 aa).

Positions 66 and 67 each coordinate carbamoyl phosphate. Lys-94 serves as a coordination point for L-aspartate. Carbamoyl phosphate contacts are provided by Arg-116, His-146, and Gln-149. Arg-180 and Arg-235 together coordinate L-aspartate. Carbamoyl phosphate is bound by residues Gly-276 and Pro-277.

Belongs to the aspartate/ornithine carbamoyltransferase superfamily. ATCase family. Heterododecamer (2C3:3R2) of six catalytic PyrB chains organized as two trimers (C3), and six regulatory PyrI chains organized as three dimers (R2).

It catalyses the reaction carbamoyl phosphate + L-aspartate = N-carbamoyl-L-aspartate + phosphate + H(+). It participates in pyrimidine metabolism; UMP biosynthesis via de novo pathway; (S)-dihydroorotate from bicarbonate: step 2/3. Catalyzes the condensation of carbamoyl phosphate and aspartate to form carbamoyl aspartate and inorganic phosphate, the committed step in the de novo pyrimidine nucleotide biosynthesis pathway. The polypeptide is Aspartate carbamoyltransferase catalytic subunit (Stenotrophomonas maltophilia (strain R551-3)).